We begin with the raw amino-acid sequence, 252 residues long: Imidazole glycerol phosphate synthase subunit HisF (252 aa).

Catalysis depends on residues aspartate 11 and aspartate 130.

The protein belongs to the HisA/HisF family. Heterodimer of HisH and HisF.

It is found in the cytoplasm. It catalyses the reaction 5-[(5-phospho-1-deoxy-D-ribulos-1-ylimino)methylamino]-1-(5-phospho-beta-D-ribosyl)imidazole-4-carboxamide + L-glutamine = D-erythro-1-(imidazol-4-yl)glycerol 3-phosphate + 5-amino-1-(5-phospho-beta-D-ribosyl)imidazole-4-carboxamide + L-glutamate + H(+). It participates in amino-acid biosynthesis; L-histidine biosynthesis; L-histidine from 5-phospho-alpha-D-ribose 1-diphosphate: step 5/9. In terms of biological role, IGPS catalyzes the conversion of PRFAR and glutamine to IGP, AICAR and glutamate. The HisF subunit catalyzes the cyclization activity that produces IGP and AICAR from PRFAR using the ammonia provided by the HisH subunit. The chain is Imidazole glycerol phosphate synthase subunit HisF from Azobacteroides pseudotrichonymphae genomovar. CFP2.